We begin with the raw amino-acid sequence, 57 residues long: High-potential iron-sulfur protein (57 aa).

Residues cysteine 21, cysteine 24, cysteine 33, and cysteine 46 each contribute to the [4Fe-4S] cluster site.

Belongs to the high-potential iron-sulfur protein (HiPIP) family. In terms of assembly, homodimer.

Functionally, specific class of high-redox-potential 4Fe-4S ferredoxins. Functions in anaerobic electron transport in most purple and in some other photosynthetic bacteria and in at least one genus (Paracoccus) of halophilic, denitrifying bacteria. The polypeptide is High-potential iron-sulfur protein (hip) (Rhodopila globiformis (Rhodopseudomonas globiformis)).